A 146-amino-acid polypeptide reads, in one-letter code: Putative phosphotransferase enzyme IIA component YadI (146 aa).

The region spanning 1-124 is the PTS EIIA type-4 domain; that stretch reads MLGWVITCHD…RIVELGAPEV (124 aa). The Tele-phosphohistidine intermediate role is filled by H9.

The protein resides in the cytoplasm. In terms of biological role, the phosphoenolpyruvate-dependent sugar phosphotransferase system (sugar PTS), a major carbohydrate active -transport system, catalyzes the phosphorylation of incoming sugar substrates concomitantly with their translocation across the cell membrane. This chain is Putative phosphotransferase enzyme IIA component YadI (yadI), found in Escherichia coli (strain K12).